Reading from the N-terminus, the 125-residue chain is SKP1-like protein 7 (125 aa).

The tract at residues 94 to 125 (MNAAYDLHIKSLLALAYQTVADMVNDNKWAFE) is interaction with the F-box domain of F-box proteins.

This sequence belongs to the SKP1 family. As to quaternary structure, part of a SCF (SKP1-cullin-F-box) protein ligase complex. Restricted to siliques.

It localises to the nucleus. It functions in the pathway protein modification; protein ubiquitination. In terms of biological role, involved in ubiquitination and subsequent proteasomal degradation of target proteins. Together with CUL1, RBX1 and a F-box protein, it forms a SCF E3 ubiquitin ligase complex. The functional specificity of this complex depends on the type of F-box protein. In the SCF complex, it serves as an adapter that links the F-box protein to CUL1. The polypeptide is SKP1-like protein 7 (ASK7) (Arabidopsis thaliana (Mouse-ear cress)).